Reading from the N-terminus, the 1166-residue chain is Serine-aspartate repeat-containing protein E (1166 aa).

The N-terminal stretch at 1–52 is a signal peptide; the sequence is MINRDNKKAITKKGMISNRLNKFSIRKYTVGTASILVGTTLIFGLGNQEAKA. Residues 23-34 carry the YSIRK-G/S signaling motif motif; sequence FSIRKYTVGTAS. Residues 53 to 606 are ligand binding A region; it reads AENTSTENAK…GDGTVKPEEK (554 aa). The tract at residues 54 to 230 is disordered; it reads ENTSTENAKQ…SKEELKNNPE (177 aa). The span at 61-75 shows a compositional bias: basic and acidic residues; sequence AKQDDATTSDNKEVV. The segment covering 77–90 has biased composition (low complexity); sequence ETENNSTTENNSTN. The segment covering 92 to 108 has biased composition (basic and acidic residues); it reads IKKETNTDSQPEAKKES. Polar residues predominate over residues 118–129; it reads NNVTATTETKPQ. Residues 130–145 show a composition bias toward basic and acidic residues; sequence NIEKENVKPSTDKTAT. Residues 166 to 178 are compositionally biased toward low complexity; that stretch reads TTKPSTSEPSTSE. Over residues 179–212 the composition is skewed to polar residues; it reads IQTKPTTPQESTNIENSQPQPTPSKVDNQVTDAT. Over residues 221–230 the composition is skewed to basic and acidic residues; that stretch reads SKEELKNNPE. CNA-B domains lie at 607–719, 720–829, and 830–940; these read LYKI…YKEP, KYNL…YKTP, and KYSL…EEDT. Positions 904–1141 are disordered; that stretch reads VTNTTEDDKD…TGSENNGSNN (238 aa). Acidic residues-rich tracts occupy residues 908–918 and 935–1105; these read TEDDKDADGGE and YFEE…DSDS. The LPXTG sorting signal signature appears at 1129–1133; it reads LPETG. Threonine 1132 carries the post-translational modification Pentaglycyl murein peptidoglycan amidated threonine. A propeptide spans 1133–1166 (removed by sortase); the sequence is GSENNGSNNATLFGGLFAALGSLLLFGRRKKQNK.

This sequence belongs to the serine-aspartate repeat-containing protein (SDr) family. In terms of assembly, interacts with host complement factor H/CFAH (via C-terminus). Interacts with host complement regulator C4BPA.

The protein resides in the secreted. Its subcellular location is the cell wall. In terms of biological role, cell surface-associated calcium-binding protein which plays an important role in adhesion and pathogenesis. Contributes to the resistance to killing by innate immune components in blood and thus attenuates bacterial clearance by interacting with host complement factor H/CFAH and modulating its activity. Inhibits also bacterial opsonization and killing by interacting with host complement regulator C4BPA and thus inhibiting classical complement pathway activation. The polypeptide is Serine-aspartate repeat-containing protein E (sdrE) (Staphylococcus aureus (strain Newman)).